The primary structure comprises 371 residues: 4-hydroxyphenylpyruvate dioxygenase-like protein (371 aa).

VOC domains lie at 7 to 135 (RLCH…LLER) and 160 to 328 (RVDH…VFTK). Positions 163, 258, and 339 each coordinate Fe cation.

It belongs to the 4HPPD family. It depends on Fe cation as a cofactor.

It localises to the mitochondrion. The catalysed reaction is 3-(4-hydroxyphenyl)pyruvate + O2 = (S)-4-hydroxymandelate + CO2. Iron-dependent dioxygenase that catalyzes the conversion of 4-hydroxyphenylpyruvate (4-HPPA) to 4-hydroxymandelate (4-HMA) in the mitochondria, one of the steps in the biosynthesis of coenzyme Q10 from tyrosine. This Homo sapiens (Human) protein is 4-hydroxyphenylpyruvate dioxygenase-like protein.